A 563-amino-acid polypeptide reads, in one-letter code: NAD(P)H-quinone oxidoreductase chain 4 (563 aa).

The next 15 helical transmembrane spans lie at 25 to 45 (FPWLSLSILFPIVGAFLVPFI), 56 to 76 (WFALGIALVTFVITVAAYLYG), 90 to 110 (VSWLPDLGLTWAVGADGISMP), 111 to 131 (LILLTSFITALAVLAAWPVTF), 133 to 153 (PKLFFFLILAMDGGQIAVFAV), 157 to 177 (LLFFLAWELELLPVYLLLAIW), 189 to 209 (FIIYTAGSSLFILLVALAMGF), 230 to 250 (GFQLLCYAGLLIAFGVKLPIV), 264 to 284 (TAPVHMLLAGILLKMGGYALM), 298 to 318 (FAPLLIVLGVVNIIYAALTSF), 335 to 355 (MGFVLIGIGSFSALGTSGAML), 356 to 376 (QMISHGLIGASLFFLVGATYD), 397 to 417 (FALWTVCALASLALPGMSGFV), 438 to 458 (IVIAGLAAIGVILTPIYLLSM), and 485 to 505 (VYIISCLLVPIIGIGLYPRLM).

The protein belongs to the complex I subunit 4 family.

It is found in the cellular thylakoid membrane. The catalysed reaction is a plastoquinone + NADH + (n+1) H(+)(in) = a plastoquinol + NAD(+) + n H(+)(out). It carries out the reaction a plastoquinone + NADPH + (n+1) H(+)(in) = a plastoquinol + NADP(+) + n H(+)(out). Its function is as follows. NDH-1 shuttles electrons from NAD(P)H, via FMN and iron-sulfur (Fe-S) centers, to quinones in the respiratory chain. The immediate electron acceptor for the enzyme in this species is believed to be plastoquinone. Couples the redox reaction to proton translocation (for every two electrons transferred, four hydrogen ions are translocated across the cytoplasmic membrane), and thus conserves the redox energy in a proton gradient. This Prochlorococcus marinus (strain MIT 9303) protein is NAD(P)H-quinone oxidoreductase chain 4.